Consider the following 274-residue polypeptide: Thiazole synthase (274 aa).

The active-site Schiff-base intermediate with DXP is lysine 111. 1-deoxy-D-xylulose 5-phosphate is bound by residues glycine 172, 198–199 (AG), and 220–221 (NS). Residues 251 to 274 (RLPERAAASPSSPTTGIIAEAKTK) are disordered.

This sequence belongs to the ThiG family. Homotetramer. Forms heterodimers with either ThiH or ThiS.

Its subcellular location is the cytoplasm. The catalysed reaction is [ThiS sulfur-carrier protein]-C-terminal-Gly-aminoethanethioate + 2-iminoacetate + 1-deoxy-D-xylulose 5-phosphate = [ThiS sulfur-carrier protein]-C-terminal Gly-Gly + 2-[(2R,5Z)-2-carboxy-4-methylthiazol-5(2H)-ylidene]ethyl phosphate + 2 H2O + H(+). It functions in the pathway cofactor biosynthesis; thiamine diphosphate biosynthesis. In terms of biological role, catalyzes the rearrangement of 1-deoxy-D-xylulose 5-phosphate (DXP) to produce the thiazole phosphate moiety of thiamine. Sulfur is provided by the thiocarboxylate moiety of the carrier protein ThiS. In vitro, sulfur can be provided by H(2)S. The protein is Thiazole synthase of Prochlorococcus marinus (strain MIT 9313).